The sequence spans 219 residues: Steroid receptor RNA activator 1 (219 aa).

2 disordered regions span residues 1–90 (MAEL…SSPV) and 192–219 (SLSS…QPSS). Positions 23–32 (YGLQTQTGGT) are enriched in polar residues. A Phosphoserine modification is found at Ser48. A compositionally biased stretch (pro residues) spans 55 to 76 (SGPPPVDHPPPSSKASRPPPMG). The span at 192-203 (SLSSEENKEEKS) shows a compositional bias: basic and acidic residues. The span at 206 to 219 (APENQTIPGFQPSS) shows a compositional bias: polar residues.

This sequence belongs to the SRA1 family. SRA1 RNA exists in a ribonucleoprotein complex containing NCOA1. The RNA also forms a complex with PUS1 and RARG in the nucleus. Interacts with AR. As to expression, expressed in various prostate cancer cell lines.

It localises to the nucleus. Its subcellular location is the cytoplasm. Its function is as follows. Functional RNA which acts as a transcriptional coactivator that selectively enhances steroid receptor-mediated transactivation ligand-independently through a mechanism involving the modulating N-terminal domain (AF-1) of steroid receptors. Also mediates transcriptional coactivation of steroid receptors ligand-dependently through the steroid-binding domain (AF-2). Enhances cellular proliferation and differentiation and promotes apoptosis in vivo. May play a role in tumorigenesis. The sequence is that of Steroid receptor RNA activator 1 from Rattus norvegicus (Rat).